Reading from the N-terminus, the 148-residue chain is SsrA-binding protein (148 aa).

Belongs to the SmpB family.

It is found in the cytoplasm. Required for rescue of stalled ribosomes mediated by trans-translation. Binds to transfer-messenger RNA (tmRNA), required for stable association of tmRNA with ribosomes. tmRNA and SmpB together mimic tRNA shape, replacing the anticodon stem-loop with SmpB. tmRNA is encoded by the ssrA gene; the 2 termini fold to resemble tRNA(Ala) and it encodes a 'tag peptide', a short internal open reading frame. During trans-translation Ala-aminoacylated tmRNA acts like a tRNA, entering the A-site of stalled ribosomes, displacing the stalled mRNA. The ribosome then switches to translate the ORF on the tmRNA; the nascent peptide is terminated with the 'tag peptide' encoded by the tmRNA and targeted for degradation. The ribosome is freed to recommence translation, which seems to be the essential function of trans-translation. The chain is SsrA-binding protein from Azoarcus sp. (strain BH72).